Reading from the N-terminus, the 432-residue chain is Adenylosuccinate synthetase (432 aa).

Residues 11–17 and 39–41 contribute to the GTP site; these read GDEGKGK and GHT. D12 serves as the catalytic Proton acceptor. Residues D12 and G39 each coordinate Mg(2+). IMP-binding positions include 12–15, 37–40, T134, R148, N230, T245, and R309; these read DEGK and NAGH. H40 acts as the Proton donor in catalysis. Residue 305 to 311 participates in substrate binding; it reads VTTGRKR. Residues R311, 337-339, and 419-421 contribute to the GTP site; these read KLD and GTG.

Belongs to the adenylosuccinate synthetase family. Homodimer. It depends on Mg(2+) as a cofactor.

The protein resides in the cytoplasm. The enzyme catalyses IMP + L-aspartate + GTP = N(6)-(1,2-dicarboxyethyl)-AMP + GDP + phosphate + 2 H(+). It participates in purine metabolism; AMP biosynthesis via de novo pathway; AMP from IMP: step 1/2. Its function is as follows. Plays an important role in the de novo pathway and in the salvage pathway of purine nucleotide biosynthesis. Catalyzes the first committed step in the biosynthesis of AMP from IMP. In Vanderwaltozyma polyspora (strain ATCC 22028 / DSM 70294 / BCRC 21397 / CBS 2163 / NBRC 10782 / NRRL Y-8283 / UCD 57-17) (Kluyveromyces polysporus), this protein is Adenylosuccinate synthetase.